Consider the following 245-residue polypeptide: Pyridoxine 5'-phosphate synthase (245 aa).

Asn9 is a binding site for 3-amino-2-oxopropyl phosphate. 11-12 (DH) serves as a coordination point for 1-deoxy-D-xylulose 5-phosphate. Arg20 contributes to the 3-amino-2-oxopropyl phosphate binding site. Catalysis depends on His45, which acts as the Proton acceptor. 1-deoxy-D-xylulose 5-phosphate is bound by residues Arg47 and His52. The Proton acceptor role is filled by Glu72. A 1-deoxy-D-xylulose 5-phosphate-binding site is contributed by Thr102. His193 acts as the Proton donor in catalysis. 3-amino-2-oxopropyl phosphate contacts are provided by residues Gly194 and 215–216 (GH).

The protein belongs to the PNP synthase family. As to quaternary structure, homooctamer; tetramer of dimers.

The protein resides in the cytoplasm. It catalyses the reaction 3-amino-2-oxopropyl phosphate + 1-deoxy-D-xylulose 5-phosphate = pyridoxine 5'-phosphate + phosphate + 2 H2O + H(+). It functions in the pathway cofactor biosynthesis; pyridoxine 5'-phosphate biosynthesis; pyridoxine 5'-phosphate from D-erythrose 4-phosphate: step 5/5. Catalyzes the complicated ring closure reaction between the two acyclic compounds 1-deoxy-D-xylulose-5-phosphate (DXP) and 3-amino-2-oxopropyl phosphate (1-amino-acetone-3-phosphate or AAP) to form pyridoxine 5'-phosphate (PNP) and inorganic phosphate. In Shewanella oneidensis (strain ATCC 700550 / JCM 31522 / CIP 106686 / LMG 19005 / NCIMB 14063 / MR-1), this protein is Pyridoxine 5'-phosphate synthase.